A 144-amino-acid polypeptide reads, in one-letter code: Large ribosomal subunit protein uL16 (144 aa).

It belongs to the universal ribosomal protein uL16 family. As to quaternary structure, part of the 50S ribosomal subunit.

In terms of biological role, binds 23S rRNA and is also seen to make contacts with the A and possibly P site tRNAs. This chain is Large ribosomal subunit protein uL16, found in Caldanaerobacter subterraneus subsp. tengcongensis (strain DSM 15242 / JCM 11007 / NBRC 100824 / MB4) (Thermoanaerobacter tengcongensis).